A 284-amino-acid polypeptide reads, in one-letter code: Elongation factor Ts (284 aa).

The involved in Mg(2+) ion dislocation from EF-Tu stretch occupies residues 80–83; the sequence is TDFV.

This sequence belongs to the EF-Ts family.

It is found in the cytoplasm. Functionally, associates with the EF-Tu.GDP complex and induces the exchange of GDP to GTP. It remains bound to the aminoacyl-tRNA.EF-Tu.GTP complex up to the GTP hydrolysis stage on the ribosome. The polypeptide is Elongation factor Ts (Neisseria meningitidis serogroup A / serotype 4A (strain DSM 15465 / Z2491)).